Here is an 863-residue protein sequence, read N- to C-terminus: Ubiquitin carboxyl-terminal hydrolase 13 (863 aa).

Ser114 is modified (phosphoserine; by AURKB). Thr122 carries the phosphothreonine modification. The UBP-type; degenerate zinc finger occupies 187–295 (PVSKYANNLT…KHLAHFGIDM (109 aa)). 4 residues coordinate Zn(2+): Cys211, Cys214, Cys231, and His244. A Glycyl lysine isopeptide (Lys-Gly) (interchain with G-Cter in SUMO2) cross-link involves residue Lys311. The 526-residue stretch at 336 to 861 (TGLKNLGNSC…LGYMYFYRRI (526 aa)) folds into the USP domain. Residue Cys345 is the Nucleophile of the active site. A Glycyl lysine isopeptide (Lys-Gly) (interchain with G-Cter in SUMO2) cross-link involves residue Lys405. UBA domains are found at residues 652–693 (DIDE…IIVH) and 727–767 (QPPE…IFSH). His823 acts as the Proton acceptor in catalysis.

It belongs to the peptidase C19 family. As to quaternary structure, interacts with UFD1. Interacts (via UBA domains) with SIAH2 (when ubiquitinated). Interacts with BAG6; the interaction is direct and may mediate UBL4A deubiquitination. Interacts (via UBA 2 domain) with AMFR; the interaction is direct. Interacts with UBL4A; may be indirect via BAG6. Interacts with NEDD4. In terms of processing, phosphorylated by AURKB at Ser-114; leading to stabilization of cell cycle proteins such as SKP2 and AURKB, but not MCL1. As to expression, highly expressed in ovary and testes.

The protein localises to the cytoplasm. The catalysed reaction is Thiol-dependent hydrolysis of ester, thioester, amide, peptide and isopeptide bonds formed by the C-terminal Gly of ubiquitin (a 76-residue protein attached to proteins as an intracellular targeting signal).. Specifically inhibited by spautin-1 (specific and potent autophagy inhibitor-1), a derivative of MBCQ that binds to USP13 and inhibits deubiquitinase activity. Regulated by PIK3C3/VPS34-containing complexes. The weak deubiquitinase activity in vitro suggests the existence of some mechanism that activates the enzyme. Its function is as follows. Deubiquitinase that mediates deubiquitination of target proteins such as BECN1, MITF, SKP2 and USP10 and is involved in various processes such as autophagy, endoplasmic reticulum-associated degradation (ERAD), cell cycle progression or DNA damage response. Component of a regulatory loop that controls autophagy and p53/TP53 levels: mediates deubiquitination of BECN1, a key regulator of autophagy, leading to stabilize the PIK3C3/VPS34-containing complexes. Alternatively, forms with NEDD4 a deubiquitination complex, which subsequently stabilizes VPS34 to promote autophagy. Also deubiquitinates USP10, an essential regulator of p53/TP53 stability. In turn, PIK3C3/VPS34-containing complexes regulate USP13 stability, suggesting the existence of a regulatory system by which PIK3C3/VPS34-containing complexes regulate p53/TP53 protein levels via USP10 and USP13. Recruited by nuclear UFD1 and mediates deubiquitination of SKP2, thereby regulating endoplasmic reticulum-associated degradation (ERAD). Also regulates ERAD through the deubiquitination of UBL4A a component of the BAG6/BAT3 complex. Mediates stabilization of SIAH2 independently of deubiquitinase activity: binds ubiquitinated SIAH2 and acts by impairing SIAH2 autoubiquitination. Regulates the cell cycle progression by stabilizing cell cycle proteins such as SKP2 and AURKB. In addition, plays an important role in maintaining genomic stability and in DNA replication checkpoint activation via regulation of RAP80 and TOPBP1. Deubiquitinates the multifunctional protein HMGB1 and subsequently drives its nucleocytoplasmic localization and its secretion. Positively regulates type I and type II interferon signalings by deubiquitinating STAT1 but negatively regulates antiviral response by deubiquitinating STING1. This chain is Ubiquitin carboxyl-terminal hydrolase 13 (USP13), found in Homo sapiens (Human).